A 175-amino-acid polypeptide reads, in one-letter code: Ribosome maturation factor RimM (175 aa).

The 81-residue stretch at 95-175 (EEGDYYWHDL…TITVDWDAGF (81 aa)) folds into the PRC barrel domain.

The protein belongs to the RimM family. As to quaternary structure, binds ribosomal protein uS19.

It is found in the cytoplasm. An accessory protein needed during the final step in the assembly of 30S ribosomal subunit, possibly for assembly of the head region. Essential for efficient processing of 16S rRNA. May be needed both before and after RbfA during the maturation of 16S rRNA. It has affinity for free ribosomal 30S subunits but not for 70S ribosomes. The sequence is that of Ribosome maturation factor RimM from Glaesserella parasuis serovar 5 (strain SH0165) (Haemophilus parasuis).